Here is a 2286-residue protein sequence, read N- to C-terminus: Non-reducing polyketide synthase fsr1 (2286 aa).

Residues 7–342 form an N-terminal acylcarrier protein transacylase domain (SAT) region; sequence LYLFGDQTFD…IYTALKKTSL (336 aa). The Ketosynthase family 3 (KS3) domain maps to 368–805; it reads KPKLAIVAMS…GGNSALLIQD (438 aa). Catalysis depends on for beta-ketoacyl synthase activity residues cysteine 540, histidine 675, and histidine 722. Positions 905–1195 are acyl/malonyl transferases; sequence VFTFTGQGAQ…GMVKPTLGQQ (291 aa). Serine 996 (for acyl/malonyl transferase activity) is an active-site residue. The interval 1285–1417 is N-terminal hotdog fold; the sequence is HSVVEESGDS…CVVLFKDRSH (133 aa). One can recognise a PKS/mFAS DH domain in the interval 1285–1591; sequence HSVVEESGDS…IQGVPRRVLK (307 aa). Residues 1296–1588 form a product template (PT) domainn region; the sequence is KTGIVVEADI…QIAIQGVPRR (293 aa). Histidine 1317 functions as the Proton acceptor; for dehydratase activity in the catalytic mechanism. The interval 1444-1591 is C-terminal hotdog fold; sequence SARFNRPMAY…IQGVPRRVLK (148 aa). Aspartate 1504 functions as the Proton donor; for dehydratase activity in the catalytic mechanism. The disordered stretch occupies residues 1600–1639; that stretch reads KKGQPQRQTQDKPRNTPSQTKDSTPKPAQNKPAAKVEPPK. In terms of domain architecture, Carrier 1 spans 1637-1712; sequence PPKFSTAIRI…DLRAFLGADE (76 aa). Serine 1671 is modified (O-(pantetheine 4'-phosphoryl)serine). The disordered stretch occupies residues 1716–1735; that stretch reads ESSSSAASDSGRDTTTTGSA. The 76-residue stretch at 1748–1823 folds into the Carrier 2 domain; it reads EVEFERALEI…DLKTMLAREM (76 aa). Serine 1782 is subject to O-(pantetheine 4'-phosphoryl)serine. Residues 1897–2145 form a reductase (R) domain region; that stretch reads VTGASGGLGS…NWTPVNDIAD (249 aa).

Its pathway is polyketide biosynthesis. In terms of biological role, non-reducing polyketide synthase; part of the gene cluster that mediates the biosynthesis of fusarubins, highly pigmented naphthoquinones responsible for the coloration of the fruiting bodies. The non-reducing polyketide synthase FSR1 is responsible for the condensation of seven acetyl-CoA units to yield a haptaketide. After rings A and B are formed by aldol-type cyclization, the PKS-derived product is released as 6-O-demethylfusarubinaldehyde. Then, two hydroxyl groups at C-5 and C-10 are incorporated by FSR3, and simultaneously hydroxyl groups at C-6 and C-8 are methylated by FSR2. The aldehyde is, on the one hand, reduced by FSR3 to 8-O-methylfusarubin alcohol, which equilibrates mainly with 8-O-methylfusarubin and only small amounts of 8-O-methylnectriafurone. On the other hand, the aldehyde can be oxidized to form 8-O-methylfusarubinic acid, a reaction driven by FSR3 equilibrating with 8-O-methylfusarubinlactone, finally resulting in 8-O-methylanhydrofusarubinlactol after a further reduction step and loss of water. 8-O-Methylfusarubinic acid can also undergo decarboxylation, resulting in 8-O-methyl-13-hydroxynorjavanicin after another hydroxylation step at C-13. Both steps are most likely also accomplished by FSR3. No enzymatic function has been determined so far for either FSR4 and FSR5. Their deletion does not alter the product spectrum, but the possibility that they catalyze specific enzymatic steps during perithecium development cannot be ruled out. FSR4 might possess a regulatory function in the biosynthesis of fusarubins. The sequence is that of Non-reducing polyketide synthase fsr1 from Gibberella fujikuroi (strain CBS 195.34 / IMI 58289 / NRRL A-6831) (Bakanae and foot rot disease fungus).